We begin with the raw amino-acid sequence, 249 residues long: MADTSSETVDFGFSTVPRGEKRHKVREVFDSVAGRYDIMNDLMSLGVHRLWKREFVAMMDPRPHRTLLDLAGGTGDISLRWLAAGGGPVLMTDINEAMLRVGRGRAEEQARIEGIGFAVADAEALPLRDSCVDRVSIAFGLRNCTDKDRVLAEARRVLKPGGRFFCLEFSRLQVAAAQPLYEKWSFVALPAIGARVAQDRESYQYLAESIRMFPDQETLAGMMRRAGFERVSYRNLSGGIAAIHSGWRL.

S-adenosyl-L-methionine is bound by residues T74, D93, and D121–A122.

It belongs to the class I-like SAM-binding methyltransferase superfamily. MenG/UbiE family.

The enzyme catalyses a 2-demethylmenaquinol + S-adenosyl-L-methionine = a menaquinol + S-adenosyl-L-homocysteine + H(+). It carries out the reaction a 2-methoxy-6-(all-trans-polyprenyl)benzene-1,4-diol + S-adenosyl-L-methionine = a 5-methoxy-2-methyl-3-(all-trans-polyprenyl)benzene-1,4-diol + S-adenosyl-L-homocysteine + H(+). The protein operates within quinol/quinone metabolism; menaquinone biosynthesis; menaquinol from 1,4-dihydroxy-2-naphthoate: step 2/2. It participates in cofactor biosynthesis; ubiquinone biosynthesis. Methyltransferase required for the conversion of demethylmenaquinol (DMKH2) to menaquinol (MKH2) and the conversion of 2-polyprenyl-6-methoxy-1,4-benzoquinol (DDMQH2) to 2-polyprenyl-3-methyl-6-methoxy-1,4-benzoquinol (DMQH2). The chain is Ubiquinone/menaquinone biosynthesis C-methyltransferase UbiE from Acidiphilium cryptum (strain JF-5).